Consider the following 137-residue polypeptide: NADH-quinone oxidoreductase subunit A (137 aa).

3 helical membrane passes run 12–32 (WAFAVFLLGVCGLIAFMLGVS), 68–88 (LVAMLFVIFDVEALFLFAWAV), and 94–114 (GWVGLVGATVFITILFAGLVY).

This sequence belongs to the complex I subunit 3 family. As to quaternary structure, NDH-1 is composed of 13 different subunits. Subunits NuoA, H, J, K, L, M, N constitute the membrane sector of the complex.

The protein resides in the cell inner membrane. It catalyses the reaction a quinone + NADH + 5 H(+)(in) = a quinol + NAD(+) + 4 H(+)(out). In terms of biological role, NDH-1 shuttles electrons from NADH, via FMN and iron-sulfur (Fe-S) centers, to quinones in the respiratory chain. The immediate electron acceptor for the enzyme in this species is believed to be ubiquinone. Couples the redox reaction to proton translocation (for every two electrons transferred, four hydrogen ions are translocated across the cytoplasmic membrane), and thus conserves the redox energy in a proton gradient. The chain is NADH-quinone oxidoreductase subunit A from Ectopseudomonas mendocina (strain ymp) (Pseudomonas mendocina).